Here is a 227-residue protein sequence, read N- to C-terminus: Cytidylate kinase (227 aa).

10 to 18 (GPASSGKST) lines the ATP pocket.

The protein belongs to the cytidylate kinase family. Type 1 subfamily.

The protein resides in the cytoplasm. The catalysed reaction is CMP + ATP = CDP + ADP. It catalyses the reaction dCMP + ATP = dCDP + ADP. This chain is Cytidylate kinase, found in Streptococcus agalactiae serotype Ia (strain ATCC 27591 / A909 / CDC SS700).